A 463-amino-acid chain; its full sequence is Ribosomal protein uS12 methylthiotransferase RimO (463 aa).

In terms of domain architecture, MTTase N-terminal spans 15–130 (PKVGMVSLGC…VMQAVHSHLP (116 aa)). Residues C24, C60, C89, C161, C165, and C168 each coordinate [4Fe-4S] cluster. The Radical SAM core domain maps to 147–392 (LTPRHYAYLK…MEVAEEVSAA (246 aa)). Residues 395–463 (ARKIGKTLKV…ADSHDLWGEV (69 aa)) form the TRAM domain.

This sequence belongs to the methylthiotransferase family. RimO subfamily. [4Fe-4S] cluster serves as cofactor.

The protein resides in the cytoplasm. It carries out the reaction L-aspartate(89)-[ribosomal protein uS12]-hydrogen + (sulfur carrier)-SH + AH2 + 2 S-adenosyl-L-methionine = 3-methylsulfanyl-L-aspartate(89)-[ribosomal protein uS12]-hydrogen + (sulfur carrier)-H + 5'-deoxyadenosine + L-methionine + A + S-adenosyl-L-homocysteine + 2 H(+). Catalyzes the methylthiolation of an aspartic acid residue of ribosomal protein uS12. The protein is Ribosomal protein uS12 methylthiotransferase RimO of Burkholderia pseudomallei (strain 668).